The chain runs to 43 residues: Potassium channel toxin gamma-KTx 4.5 (43 aa).

4 cysteine pairs are disulfide-bonded: Cys-5-Cys-23, Cys-11-Cys-34, Cys-20-Cys-39, and Cys-24-Cys-41.

Belongs to the ergtoxin family. Gamma-KTx 4 subfamily. As to expression, expressed by the venom gland.

It localises to the secreted. In terms of biological role, reversibly blocks Kv11/ERG potassium channels. The chain is Potassium channel toxin gamma-KTx 4.5 from Centruroides exilicauda (Bark scorpion).